Consider the following 213-residue polypeptide: Glutathione S-transferase DHAR2 (213 aa).

Cysteine 6 carries the post-translational modification S-glutathionyl cysteine. Glutathione-binding residues include lysine 8 and aspartate 19. Residues lysine 8 and aspartate 19 each contribute to the L-ascorbate site. The region spanning 10 to 83 (AVGAPDVLGD…DVIVGLLEEK (74 aa)) is the GST N-terminal domain. Residue cysteine 20 is modified to S-glutathionyl cysteine. Catalysis depends on cysteine 20, which acts as the Nucleophile. The Glutathione-binding signature appears at 20 to 25 (CPFSQR). Positions 47, 60, 73, 160, and 207 each coordinate glutathione. Residues 84-213 (YPEPSLKTPP…VAGWESKVNA (130 aa)) enclose the GST C-terminal domain. Lysine 210 is a binding site for L-ascorbate.

This sequence belongs to the GST superfamily. DHAR family. Monomer. Spontaneous S-glutathionylation in the presence of oxidized glutathione (GSSG).

The protein localises to the cytoplasm. It localises to the cytosol. It catalyses the reaction RX + glutathione = an S-substituted glutathione + a halide anion + H(+). The catalysed reaction is L-dehydroascorbate + 2 glutathione = glutathione disulfide + L-ascorbate. In terms of biological role, displays a dual function. As a soluble protein, exhibits glutathione-dependent thiol transferase and dehydroascorbate (DHA) reductase activities. Exhibits glutathione-dependent thiol transferase and dehydroascorbate (DHA) reductase activities. Key component of the ascorbate recycling system. Involved in the redox homeostasis, especially in scavenging of ROS under oxidative stresses. Plays a role in ozone tolerance. The sequence is that of Glutathione S-transferase DHAR2 (DHAR2) from Arabidopsis thaliana (Mouse-ear cress).